Here is a 164-residue protein sequence, read N- to C-terminus: Pyruvoyl-dependent arginine decarboxylase (164 aa).

Ser-52 is subject to Pyruvic acid (Ser).

It belongs to the PdaD family. It depends on pyruvate as a cofactor.

The enzyme catalyses L-arginine + H(+) = agmatine + CO2. This is Pyruvoyl-dependent arginine decarboxylase from Methanococcus maripaludis (strain C6 / ATCC BAA-1332).